A 311-amino-acid chain; its full sequence is Transmembrane protein DDB_G0273707/DDB_G0273361 (311 aa).

Residues 1-113 (MNEIEVDNLS…NNNNNKNENN (113 aa)) are disordered. A glycan (N-linked (GlcNAc...) asparagine) is linked at N8. A compositionally biased stretch (polar residues) spans 9–18 (LSHTNKNVAT). N-linked (GlcNAc...) asparagine glycosylation is found at N35, N38, N62, and N76. Composition is skewed to low complexity over residues 37–67 (SNNS…SNSN) and 76–111 (NNSN…NKNE). The stretch at 95 to 124 (NNNNNNNNNNNNNNKNENNNKIKNEKINIL) forms a coiled coil. 5 helical membrane passes run 150–170 (LEEI…LALL), 181–201 (IFLL…PKSP), 208–228 (LVLG…ALVY), 235–255 (VACA…KSIH), and 276–296 (FYYI…TALI).

Its subcellular location is the membrane. In Dictyostelium discoideum (Social amoeba), this protein is Transmembrane protein DDB_G0273707/DDB_G0273361.